We begin with the raw amino-acid sequence, 157 residues long: Ribonuclease H (157 aa).

An RNase H type-1 domain is found at M1–K142. Residues D10, E48, D70, and D134 each contribute to the Mg(2+) site.

The protein belongs to the RNase H family. As to quaternary structure, monomer. Mg(2+) is required as a cofactor.

Its subcellular location is the cytoplasm. It carries out the reaction Endonucleolytic cleavage to 5'-phosphomonoester.. Functionally, endonuclease that specifically degrades the RNA of RNA-DNA hybrids. This is Ribonuclease H from Wigglesworthia glossinidia brevipalpis.